An 811-amino-acid polypeptide reads, in one-letter code: Ribosome biogenesis protein ERB1 (811 aa).

The segment covering Met-1–Pro-11 has biased composition (polar residues). The disordered stretch occupies residues Met-1–Pro-138. The span at Glu-27 to Ser-96 shows a compositional bias: acidic residues. Residues Ala-104–Ala-121 are compositionally biased toward polar residues. Basic and acidic residues predominate over residues Glu-128–Pro-138. The tract at residues Arg-270 to Gly-386 is required for interaction with NOP7. The interval Gly-386–Pro-422 is required for interaction with YTM1. 2 WD repeats span residues Gly-438–Lys-477 and Asn-485–Glu-525. The disordered stretch occupies residues Thr-547 to Ala-566. 5 WD repeats span residues Gln-595–Pro-637, Lys-640–Lys-678, Pro-681–Lys-720, Tyr-724–Thr-764, and Ile-780–Thr-811.

It belongs to the WD repeat BOP1/ERB1 family. Component of the NOP7 complex, composed of ERB1, NOP7 and YTM1. The complex is held together by ERB1, which interacts with NOP7 via its N-terminal domain and with YTM1 via a high-affinity interaction between the seven-bladed beta-propeller domains of the 2 proteins. The NOP7 complex associates with the 66S pre-ribosome.

The protein resides in the nucleus. Its subcellular location is the nucleolus. It localises to the nucleoplasm. In terms of biological role, component of the NOP7 complex, which is required for maturation of the 25S and 5.8S ribosomal RNAs and formation of the 60S ribosome. This is Ribosome biogenesis protein ERB1 from Debaryomyces hansenii (strain ATCC 36239 / CBS 767 / BCRC 21394 / JCM 1990 / NBRC 0083 / IGC 2968) (Yeast).